The sequence spans 70 residues: ATP synthase subunit c (70 aa).

2 helical membrane-spanning segments follow: residues 4–24 (IAAAIAIGLGALGAGIGNGLI) and 49–69 (GIALVEALPIIAVVIAFLAFF).

Belongs to the ATPase C chain family. As to quaternary structure, F-type ATPases have 2 components, F(1) - the catalytic core - and F(0) - the membrane proton channel. F(1) has five subunits: alpha(3), beta(3), gamma(1), delta(1), epsilon(1). F(0) has three main subunits: a(1), b(2) and c(10-14). The alpha and beta chains form an alternating ring which encloses part of the gamma chain. F(1) is attached to F(0) by a central stalk formed by the gamma and epsilon chains, while a peripheral stalk is formed by the delta and b chains. The F(1)F(0) complex interacts with SpoIIIJ and YqjG; YqgA is found in the same complex.

The protein localises to the cell membrane. In terms of biological role, f(1)F(0) ATP synthase produces ATP from ADP in the presence of a proton or sodium gradient. F-type ATPases consist of two structural domains, F(1) containing the extramembraneous catalytic core and F(0) containing the membrane proton channel, linked together by a central stalk and a peripheral stalk. During catalysis, ATP synthesis in the catalytic domain of F(1) is coupled via a rotary mechanism of the central stalk subunits to proton translocation. Key component of the F(0) channel; it plays a direct role in translocation across the membrane. A homomeric c-ring of between 10-14 subunits forms the central stalk rotor element with the F(1) delta and epsilon subunits. The protein is ATP synthase subunit c of Bacillus subtilis (strain 168).